Reading from the N-terminus, the 508-residue chain is Maturase K (508 aa).

The protein belongs to the intron maturase 2 family. MatK subfamily.

It is found in the plastid. Its subcellular location is the chloroplast. Usually encoded in the trnK tRNA gene intron. Probably assists in splicing its own and other chloroplast group II introns. This chain is Maturase K, found in Collinsia heterophylla (Purple Chinese houses).